Here is an 87-residue protein sequence, read N- to C-terminus: Elongation factor Ts, chloroplastic (87 aa).

This sequence belongs to the EF-Ts family.

The protein resides in the plastid. The protein localises to the chloroplast. Functionally, associates with the EF-Tu.GDP complex and induces the exchange of GDP to GTP. It remains bound to the aminoacyl-tRNA.EF-Tu.GTP complex up to the GTP hydrolysis stage on the ribosome. This chain is Elongation factor Ts, chloroplastic (tsf), found in Antithamnion sp. (Red alga).